The primary structure comprises 486 residues: Beta-barrel assembly-enhancing protease (486 aa).

The first 19 residues, 1 to 19 (MIATLLSSLLLTGPISAGA), serve as a signal peptide directing secretion. H134 lines the Zn(2+) pocket. Residue E135 is part of the active site. Zn(2+) contacts are provided by H138 and E199. The active-site Proton donor is D203.

Belongs to the peptidase M48 family. BepA subfamily. Requires Zn(2+) as cofactor.

It localises to the periplasm. Functions both as a chaperone and a metalloprotease. Maintains the integrity of the outer membrane by promoting either the assembly or the elimination of outer membrane proteins, depending on their folding state. The sequence is that of Beta-barrel assembly-enhancing protease from Yersinia pestis.